Reading from the N-terminus, the 423-residue chain is Mannose-6-phosphate isomerase (423 aa).

N-acetylalanine is present on Ala-2. A phosphoserine mark is found at Ser-102 and Ser-108. Positions 110, 112, 137, and 276 each coordinate Zn(2+). Residue Arg-295 is part of the active site.

It belongs to the mannose-6-phosphate isomerase type 1 family. The cofactor is Zn(2+).

It is found in the cytoplasm. It catalyses the reaction D-mannose 6-phosphate = D-fructose 6-phosphate. It participates in nucleotide-sugar biosynthesis; GDP-alpha-D-mannose biosynthesis; alpha-D-mannose 1-phosphate from D-fructose 6-phosphate: step 1/2. In terms of biological role, isomerase that catalyzes the interconversion of fructose-6-P and mannose-6-P and has a critical role in the supply of D-mannose derivatives required for many eukaryotic glycosylation reactions. In Bos taurus (Bovine), this protein is Mannose-6-phosphate isomerase (MPI).